Here is a 159-residue protein sequence, read N- to C-terminus: Phosphopantetheine adenylyltransferase (159 aa).

Residue threonine 10 coordinates substrate. Residues threonine 10 to phenylalanine 11 and histidine 18 each bind ATP. 3 residues coordinate substrate: lysine 42, leucine 74, and arginine 88. Residues glycine 89–arginine 91, glutamate 99, and asparagine 124–threonine 130 each bind ATP.

The protein belongs to the bacterial CoaD family. As to quaternary structure, homohexamer. Mg(2+) serves as cofactor.

The protein localises to the cytoplasm. It catalyses the reaction (R)-4'-phosphopantetheine + ATP + H(+) = 3'-dephospho-CoA + diphosphate. It functions in the pathway cofactor biosynthesis; coenzyme A biosynthesis; CoA from (R)-pantothenate: step 4/5. In terms of biological role, reversibly transfers an adenylyl group from ATP to 4'-phosphopantetheine, yielding dephospho-CoA (dPCoA) and pyrophosphate. This chain is Phosphopantetheine adenylyltransferase, found in Shewanella pealeana (strain ATCC 700345 / ANG-SQ1).